A 289-amino-acid polypeptide reads, in one-letter code: Ribosomal RNA small subunit methyltransferase A (289 aa).

Residues asparagine 28, leucine 30, glycine 55, glutamate 76, aspartate 101, and asparagine 125 each coordinate S-adenosyl-L-methionine.

It belongs to the class I-like SAM-binding methyltransferase superfamily. rRNA adenine N(6)-methyltransferase family. RsmA subfamily.

The protein resides in the cytoplasm. It carries out the reaction adenosine(1518)/adenosine(1519) in 16S rRNA + 4 S-adenosyl-L-methionine = N(6)-dimethyladenosine(1518)/N(6)-dimethyladenosine(1519) in 16S rRNA + 4 S-adenosyl-L-homocysteine + 4 H(+). Functionally, specifically dimethylates two adjacent adenosines (A1518 and A1519) in the loop of a conserved hairpin near the 3'-end of 16S rRNA in the 30S particle. May play a critical role in biogenesis of 30S subunits. In Clostridioides difficile (strain 630) (Peptoclostridium difficile), this protein is Ribosomal RNA small subunit methyltransferase A.